The sequence spans 166 residues: Thiol peroxidase (166 aa).

In terms of domain architecture, Thioredoxin spans leucine 18–lysine 166. Residue cysteine 60 is the Cysteine sulfenic acid (-SOH) intermediate of the active site. Residues cysteine 60 and cysteine 94 are joined by a disulfide bond.

The protein belongs to the peroxiredoxin family. Tpx subfamily. As to quaternary structure, homodimer.

It carries out the reaction a hydroperoxide + [thioredoxin]-dithiol = an alcohol + [thioredoxin]-disulfide + H2O. Functionally, thiol-specific peroxidase that catalyzes the reduction of hydrogen peroxide and organic hydroperoxides to water and alcohols, respectively. Plays a role in cell protection against oxidative stress by detoxifying peroxides. The chain is Thiol peroxidase from Helicobacter pylori (strain J99 / ATCC 700824) (Campylobacter pylori J99).